Here is a 262-residue protein sequence, read N- to C-terminus: MEHLERCAWFLRGTLVRATVRRHLPWALVAAMLAGSVVKELSPLPESYLSNKRNVLNVYFVKLAWAWTVCLLLPFIALTNYHLTGKTSLVLRRLSTLLVGTAIWYICTALFSNIEHYTGSCYQSPALEGIRQEHRSKQQCHREGGFWHGFDISGHSFLLTFCALMIVEEMAVLHEVKTDRGHHLHAAITTLVVALGFLTFIWVWMFLCTAVYFHDLTQKVFGTMFGLLGWYGTYGYWYLKSFSPGLPPQSCSLTLKRDTYKK.

Residues 1-23 (MEHLERCAWFLRGTLVRATVRRH) lie on the Cytoplasmic side of the membrane. The helical transmembrane segment at 24-44 (LPWALVAAMLAGSVVKELSPL) threads the bilayer. Residues 45-57 (PESYLSNKRNVLN) lie on the Lumenal side of the membrane. Residues 58-78 (VYFVKLAWAWTVCLLLPFIAL) traverse the membrane as a helical segment. Over 79–93 (TNYHLTGKTSLVLRR) the chain is Cytoplasmic. The chain crosses the membrane as a helical span at residues 94–114 (LSTLLVGTAIWYICTALFSNI). The Lumenal portion of the chain corresponds to 115–145 (EHYTGSCYQSPALEGIRQEHRSKQQCHREGG). Residues 146–166 (FWHGFDISGHSFLLTFCALMI) traverse the membrane as a helical segment. His155 is a catalytic residue. The Cytoplasmic segment spans residues 167–190 (VEEMAVLHEVKTDRGHHLHAAITT). Residues 191-211 (LVVALGFLTFIWVWMFLCTAV) traverse the membrane as a helical segment. Residues 212 to 218 (YFHDLTQ) lie on the Lumenal side of the membrane. Residue His214 is part of the active site. The helical transmembrane segment at 219–239 (KVFGTMFGLLGWYGTYGYWYL) threads the bilayer. Topologically, residues 240–262 (KSFSPGLPPQSCSLTLKRDTYKK) are cytoplasmic.

Belongs to the FIT family. As to expression, widely expressed, with highest levels in white and brown adipose tissues (at protein level). In the heart, mRNA expression levels do not correlate well with protein levels, suggesting post-transcriptional regulation in this organ.

The protein localises to the endoplasmic reticulum membrane. It catalyses the reaction an acyl-CoA + H2O = an acyl-4'-phosphopantetheine + adenosine 3',5'-bisphosphate + 2 H(+). It carries out the reaction (9Z)-octadecenoyl-CoA + H2O = S-(9Z-octadecenoyl)-4'-phosphopantetheine + adenosine 3',5'-bisphosphate + 2 H(+). The enzyme catalyses (5Z,8Z,11Z,14Z)-eicosatetraenoyl-CoA + H2O = S-(5Z,8Z,11Z,14Z-eicosatetraenoyl)-4'-phosphopantetheine + adenosine 3',5'-bisphosphate + 2 H(+). The catalysed reaction is hexadecanoyl-CoA + H2O = S-hexadecanoyl-4'-phosphopantetheine + adenosine 3',5'-bisphosphate + 2 H(+). Fatty acyl-coenzyme A (CoA) diphosphatase that hydrolyzes fatty acyl-CoA to yield acyl-4'-phosphopantetheine and adenosine 3',5'-bisphosphate. Preferentially hydrolyzes unsaturated long-chain acyl-CoA substrates such as oleoyl-CoA/(9Z)-octadecenoyl-CoA and arachidonoyl-CoA/(5Z,8Z,11Z,14Z)-eicosatetraenoyl-CoA in the endoplasmic reticulum (ER) lumen. This catalytic activity is required for maintaining ER structure and for lipid droplets (LDs) biogenesis, which are lipid storage organelles involved in maintaining lipid and energy homeostasis. Directly binds to diacylglycerol (DAGs) and triacylglycerol, which is also important for LD biogenesis. May support directional budding of nacent LDs from the ER into the cytosol by reducing DAG levels at sites of LD formation. Plays a role in the regulation of cell morphology and cytoskeletal organization. The chain is Acyl-coenzyme A diphosphatase FITM2 from Mus musculus (Mouse).